Here is a 151-residue protein sequence, read N- to C-terminus: Small ribosomal subunit protein uS13 (151 aa).

The protein belongs to the universal ribosomal protein uS13 family. In terms of assembly, part of the 30S ribosomal subunit. Forms a loose heterodimer with protein S19. Forms two bridges to the 50S subunit in the 70S ribosome.

Its function is as follows. Located at the top of the head of the 30S subunit, it contacts several helices of the 16S rRNA. In the 70S ribosome it contacts the 23S rRNA (bridge B1a) and protein L5 of the 50S subunit (bridge B1b), connecting the 2 subunits; these bridges are implicated in subunit movement. This is Small ribosomal subunit protein uS13 from Hyperthermus butylicus (strain DSM 5456 / JCM 9403 / PLM1-5).